A 208-amino-acid chain; its full sequence is NAD(P)H-quinone oxidoreductase subunit M, chloroplastic (208 aa).

The N-terminal 21 residues, 1–21 (MAATSSYTACTKFSMLGWIGG), are a transit peptide targeting the chloroplast. Residues 37-49 (QQAEVEESQQVNA) are compositionally biased toward low complexity. The disordered stretch occupies residues 37–70 (QQAEVEESQQVNAQEEEQEKMKQQGKQKLPRPVE).

The protein belongs to the NDH complex subunit M family. As to quaternary structure, part of the chloroplast NDH complex, composed of a mixture of chloroplast and nucleus encoded subunits. Component of the NDH subcomplex A, at least composed of ndhH, ndhI, ndhJ, ndhK, ndhL, ndhM, ndhN and ndhO.

It is found in the plastid. It localises to the chloroplast thylakoid membrane. It carries out the reaction a plastoquinone + NADH + (n+1) H(+)(in) = a plastoquinol + NAD(+) + n H(+)(out). It catalyses the reaction a plastoquinone + NADPH + (n+1) H(+)(in) = a plastoquinol + NADP(+) + n H(+)(out). Functionally, NDH shuttles electrons from NAD(P)H:plastoquinone, via FMN and iron-sulfur (Fe-S) centers, to quinones in the photosynthetic chain and possibly in a chloroplast respiratory chain. The immediate electron acceptor for the enzyme in this species is believed to be plastoquinone. Couples the redox reaction to proton translocation, and thus conserves the redox energy in a proton gradient. The sequence is that of NAD(P)H-quinone oxidoreductase subunit M, chloroplastic from Vitis vinifera (Grape).